We begin with the raw amino-acid sequence, 911 residues long: Anoctamin-6 (911 aa).

Topologically, residues 1-301 are cytoplasmic; sequence MQMMTRKVLL…YGEKIGIYFA (301 aa). A helical membrane pass occupies residues 302–322; sequence WLGYYTQMLLLAAVVGVACFL. At 323 to 376 the chain is on the extracellular side; it reads YGYLDQDNCTWSKEVCDPDIGGQILMCPQCDRLCPFWRLNITCESSKKLCIFDS. Asparagine 330 carries an N-linked (GlcNAc...) asparagine glycan. Disulfide bonds link cysteine 331-cysteine 372, cysteine 338-cysteine 365, cysteine 349-cysteine 807, cysteine 352-cysteine 356, and cysteine 596-cysteine 601. N-linked (GlcNAc...) asparagine glycosylation occurs at asparagine 362. The helical transmembrane segment at 377–397 threads the bilayer; it reads FGTLIFAVFMGVWVTLFLEFW. The Cytoplasmic portion of the chain corresponds to 398-456; sequence KRRQAELEYEWDTVELQQEEQARPEYEAQCNHVVINEITQEEERIPFTTCGKCIRVTLC. The helical transmembrane segment at 457–477 threads the bilayer; sequence ASAVFFWILLIIASVIGIIVY. At 478-510 the chain is on the extracellular side; sequence RLSVFIVFSTTLPKNPNGTDPIQKYLTPQMATS. Residue asparagine 494 is glycosylated (N-linked (GlcNAc...) asparagine). A helical membrane pass occupies residues 511 to 531; the sequence is ITASIISFIIIMILNTIYEKV. At 532 to 552 the chain is on the cytoplasmic side; the sequence is AIMITNFELPRTQTDYENSLT. Residues 553–573 form a helical membrane-spanning segment; the sequence is MKMFLFQFVNYYSSCFYIAFF. Residues 574-602 lie on the Extracellular side of the membrane; the sequence is KGKFVGYPGDPVYLLGKYRSEECDPGGCL. A helical membrane pass occupies residues 603–622; the sequence is LELTTQLTIIMGGKAIWNNI. Over 623-664 the chain is Cytoplasmic; sequence QEVLLPWVMNLIGRYKRVSGSEKITPRWEQDYHLQPMGKLGL. 3 residues coordinate Ca(2+): glutamate 624, glutamate 667, and glutamate 670. Helical transmembrane passes span 665–685 and 686–706; these read FYEYLEMIIQFGFVTLFVASF and PLAPLLALVNNILEIRVDAWK. Topologically, residues 707-723 are cytoplasmic; it reads LTTQFRRMVPEKAQDIG. A helical membrane pass occupies residues 724–744; it reads AWQPIMQGIAILAVVTNAMII. The Extracellular segment spans residues 745–837; it reads AFTSDMIPRL…YWHVIAAKLA (93 aa). N-linked (GlcNAc...) asparagine glycans are attached at residues asparagine 778, asparagine 785, and asparagine 803. A helical membrane pass occupies residues 838 to 858; the sequence is FIIVMEHIIYSVKFFISYAIP. The Cytoplasmic portion of the chain corresponds to 859-911; sequence DVSKITKSKIKREKYLTQKLLHESHLKDLTKNMGIIAERIGGTVDNSVRPKLE.

The protein belongs to the anoctamin family. In terms of assembly, homodimer. In terms of tissue distribution, predominant expression seen in epithelial tissues. Also found in skeletal system where it is primarily expressed in osteoblasts.

The protein localises to the cell membrane. The catalysed reaction is a 1,2-diacyl-sn-glycero-3-phospho-L-serine(in) = a 1,2-diacyl-sn-glycero-3-phospho-L-serine(out). It catalyses the reaction a beta-D-galactosyl-(1&lt;-&gt;1')-N-acylsphing-4-enine(out) = a beta-D-galactosyl-(1&lt;-&gt;1')-N-acylsphing-4-enine(in). The enzyme catalyses a 1,2-diacyl-sn-glycero-3-phosphocholine(in) = a 1,2-diacyl-sn-glycero-3-phosphocholine(out). Exhibits synergistic gating by Ca(2+) and voltage. Inhibited by some non-specific cation channel blockers such as: ruthenium red, 2-aminoethyl diphenylborinate (2APB), gadolinium and cadmium ions. Functionally, small-conductance calcium-activated nonselective cation (SCAN) channel which acts as a regulator of phospholipid scrambling in platelets, osteoblasts and fetal thymocytes. Phospholipid scrambling results in surface exposure of phosphatidylserine which in platelets is essential to trigger the clotting system whereas in osteoblasts is essential for the deposition of hydroxyapatite during bone mineralization. Has calcium-dependent phospholipid scramblase activity; scrambles phosphatidylserine, phosphatidylcholine and galactosylceramide. Can generate outwardly rectifying chloride channel currents in airway epithelial cells and Jurkat T lymphocytes. This is Anoctamin-6 (Ano6) from Mus musculus (Mouse).